The chain runs to 371 residues: Carlactonoate CLA methyltransferase (371 aa).

Residue Tyr-21 coordinates S-adenosyl-L-homocysteine. Residue Gln-28 participates in (11R)-carlactonoate binding. Residues Cys-62, Asn-67, Asp-101, Leu-102, Ser-141, and Phe-142 each coordinate S-adenosyl-L-homocysteine. His-162 and Trp-163 together coordinate (11R)-carlactonoate. Residues Asn-180, Asp-266, Tyr-268, and Asp-269 each contribute to the Mg(2+) site.

The protein belongs to the methyltransferase superfamily. Type-7 methyltransferase family. SABATH subfamily. In terms of assembly, homodimer. The cofactor is Mg(2+).

The catalysed reaction is (11R)-carlactonoate + S-adenosyl-L-methionine = (11R)-methyl carlactonoate + S-adenosyl-L-homocysteine. Methyltransferase involved in the biosynthesis of strigolactone natural products, bioactive compounds promoting plant fitness and soil microbe interactions, but preventing shoot branching. Catalyzes the biosynthesis of (11R)-methyl carlactonoate (MeCLA) from (11R)-carlactonoate (CLA), downstream of MAX1; MeCLA is probably biologically active as a hormone regulating shoot branching and serves as a precursor of non-canonical strigolactones (SLs). The polypeptide is Carlactonoate CLA methyltransferase (Arabidopsis thaliana (Mouse-ear cress)).